The sequence spans 331 residues: T-cell acute lymphocytic leukemia protein 1 (331 aa).

Residues 1-22 (MTERPPSEAARSDPQLEGRDAA) are compositionally biased toward basic and acidic residues. 2 disordered regions span residues 1-27 (MTER…ASMA) and 40-86 (ETSR…EARH). Ser-12 carries the phosphoserine modification. Gly residues predominate over residues 56–70 (ARGGPGGGPAGGGGA). A compositionally biased stretch (basic and acidic residues) spans 72 to 86 (RDLKGRDAATAEARH). A phosphoserine mark is found at Ser-122 and Ser-172. Residues 187-239 (VRRIFTNSRERWRQQNVNGAFAELRKLIPTHPPDKKLSKNEILRLAMKYINFL) form the bHLH domain. Residues 249-331 (EGTQRAKTGK…LPAADGAGPR (83 aa)) are disordered. Residues 263–275 (GAGGGGGGGGGGA) are compositionally biased toward gly residues.

In terms of assembly, efficient DNA binding requires dimerization with another bHLH protein. Forms heterodimers with TCF3. Binds to the LIM domain containing protein LMO2 and to DRG1. Can assemble in a complex with LDB1 and LMO2. Component of a TAL-1 complex composed at least of CBFA2T3, LDB1, TAL1 and TCF3. Interacts with SBNO2; this interaction inhibits TAL1 occupancy of the DCSTAMP promoter, leading to the activation of the DCSTAMP promoter by the transcription factor MITF. Post-translationally, phosphorylated on serine residues. Phosphorylation of Ser-122 is strongly stimulated by hypoxia. Ubiquitinated; subsequent to hypoxia-dependent phosphorylation of Ser-122, ubiquitination targets the protein for rapid degradation via the ubiquitin system. This process may be characteristic for microvascular endothelial cells, since it could not be observed in large vessel endothelial cells. Leukemic stem cell.

The protein resides in the nucleus. Its function is as follows. Implicated in the genesis of hemopoietic malignancies. It may play an important role in hemopoietic differentiation. Serves as a positive regulator of erythroid differentiation. The polypeptide is T-cell acute lymphocytic leukemia protein 1 (TAL1) (Homo sapiens (Human)).